The chain runs to 256 residues: Nickel import ATP-binding protein NikD (256 aa).

The ABC transporter domain maps to 6 to 245 (LEIRGLRIET…PASATARTLL (240 aa)). 38 to 45 (GASGSGKS) contributes to the ATP binding site.

This sequence belongs to the ABC transporter superfamily. Nickel importer (TC 3.A.1.5.3) family. The complex is composed of two ATP-binding proteins (NikD and NikE), two transmembrane proteins (NikB and NikC) and a solute-binding protein (NikA).

It is found in the cell inner membrane. The catalysed reaction is Ni(2+)(out) + ATP + H2O = Ni(2+)(in) + ADP + phosphate + H(+). Its function is as follows. Part of the ABC transporter complex NikABCDE involved in nickel import. Responsible for energy coupling to the transport system. The sequence is that of Nickel import ATP-binding protein NikD from Pseudomonas putida (strain ATCC 47054 / DSM 6125 / CFBP 8728 / NCIMB 11950 / KT2440).